The primary structure comprises 505 residues: Cytochrome P450 76A2 (505 aa).

A heme-binding site is contributed by Cys448.

This sequence belongs to the cytochrome P450 family. The cofactor is heme.

This Solanum melongena (Eggplant) protein is Cytochrome P450 76A2 (CYP76A2).